The chain runs to 187 residues: UPF0301 protein Sbal195_3177 (187 aa).

Belongs to the UPF0301 (AlgH) family.

The protein is UPF0301 protein Sbal195_3177 of Shewanella baltica (strain OS195).